We begin with the raw amino-acid sequence, 257 residues long: MIKRTLLAAAIFSALPAYAGLTSITAGYDFTDYSGDHGNRNLAYAELVAKVENATLLFNLSQGRRDYETEHFNATRGQGAVWYKWNNWLTTRTGIAFADNTPVFARQDFRQDINLALLPKTLFTTGYRYTKYYDDVEVDAWQGGVSLYTGPVITSYRYTHYDSSDAGGSYSNMISVRLNDPRGTGYTQLWLSRGTGAYTYDWTPETRYGSMKSVSLQRIQPLTEQLNLGLTAGKVWYDTPTDDFNGLQLAARLTWKF.

A signal peptide spans 1–19; it reads MIKRTLLAAAIFSALPAYA.

It localises to the cell outer membrane. This Escherichia coli (strain K12) protein is Outer membrane protein YaiO (yaiO).